Reading from the N-terminus, the 379-residue chain is Dihydroorotate dehydrogenase (quinone) (379 aa).

Residues 79-83 (AGCDK) and alanine 103 contribute to the FMN site. Residue lysine 83 coordinates substrate. 128-131 (NRLG) is a substrate binding site. FMN contacts are provided by asparagine 160 and asparagine 193. Asparagine 193 contacts substrate. The active-site Nucleophile is serine 196. Residue asparagine 198 coordinates substrate. Residues lysine 231 and threonine 259 each contribute to the FMN site. 260–261 (NT) contributes to the substrate binding site. Residues glycine 289, glycine 318, and 339–340 (YT) each bind FMN.

It belongs to the dihydroorotate dehydrogenase family. Type 2 subfamily. In terms of assembly, monomer. FMN serves as cofactor.

It is found in the cell membrane. The catalysed reaction is (S)-dihydroorotate + a quinone = orotate + a quinol. The protein operates within pyrimidine metabolism; UMP biosynthesis via de novo pathway; orotate from (S)-dihydroorotate (quinone route): step 1/1. Its function is as follows. Catalyzes the conversion of dihydroorotate to orotate with quinone as electron acceptor. The sequence is that of Dihydroorotate dehydrogenase (quinone) from Crocosphaera subtropica (strain ATCC 51142 / BH68) (Cyanothece sp. (strain ATCC 51142)).